The primary structure comprises 257 residues: uncharacterized protein (257 aa).

Positions 1 to 26 are cleaved as a signal peptide; the sequence is MKKAFILSAAAAVGLFTFGGVQQASA. Positions 80–135 are disordered; it reads AKQSNVKVQDVQKTETAKPAQKTTEKAAADQNTASKAPATAEKTNTTTSAPSSVSA. Over residues 121 to 134 the composition is skewed to polar residues; the sequence is EKTNTTTSAPSSVS. The SCP domain occupies 141 to 254; sequence VELTNAERQK…ESGSIWTQQF (114 aa).

This is an uncharacterized protein from Bacillus subtilis (strain 168).